The sequence spans 936 residues: Protein translocase subunit SecA (936 aa).

ATP contacts are provided by residues glutamine 90, 108–112 (GEGKT), and aspartate 499.

The protein belongs to the SecA family. In terms of assembly, monomer and homodimer. Part of the essential Sec protein translocation apparatus which comprises SecA, SecYEG and auxiliary proteins SecDF. Other proteins may also be involved.

It is found in the cell inner membrane. The protein localises to the cellular thylakoid membrane. Its subcellular location is the cytoplasm. It catalyses the reaction ATP + H2O + cellular proteinSide 1 = ADP + phosphate + cellular proteinSide 2.. In terms of biological role, part of the Sec protein translocase complex. Interacts with the SecYEG preprotein conducting channel. Has a central role in coupling the hydrolysis of ATP to the transfer of proteins into and across the cell membrane, serving as an ATP-driven molecular motor driving the stepwise translocation of polypeptide chains across the membrane. Its function is as follows. Probably participates in protein translocation into and across both the cytoplasmic and thylakoid membranes in cyanobacterial cells. The sequence is that of Protein translocase subunit SecA from Trichodesmium erythraeum (strain IMS101).